The primary structure comprises 705 residues: Elongation factor G (705 aa).

The region spanning 7 to 287 (HLTRNIGIMA…YVCAFLPSPL (281 aa)) is the tr-type G domain. Residues 16–23 (AHIDAGKT), 84–88 (DTPGH), and 138–141 (NKMD) each bind GTP. The interval 293–312 (VGTNPTTGAEEDRKPSEDEK) is disordered. Basic and acidic residues predominate over residues 302-312 (EEDRKPSEDEK).

The protein belongs to the TRAFAC class translation factor GTPase superfamily. Classic translation factor GTPase family. EF-G/EF-2 subfamily.

It localises to the cytoplasm. In terms of biological role, catalyzes the GTP-dependent ribosomal translocation step during translation elongation. During this step, the ribosome changes from the pre-translocational (PRE) to the post-translocational (POST) state as the newly formed A-site-bound peptidyl-tRNA and P-site-bound deacylated tRNA move to the P and E sites, respectively. Catalyzes the coordinated movement of the two tRNA molecules, the mRNA and conformational changes in the ribosome. This is Elongation factor G from Phocaeicola vulgatus (strain ATCC 8482 / DSM 1447 / JCM 5826 / CCUG 4940 / NBRC 14291 / NCTC 11154) (Bacteroides vulgatus).